The sequence spans 403 residues: Probable protein phosphatase 2C 8 (403 aa).

The segment at 42 to 80 (LGRTASAVAEDDAAKRVRPASDSSSDSSESAKVAPEPTA) is disordered. A compositionally biased stretch (low complexity) spans 62–71 (SDSSSDSSES). One can recognise a PPM-type phosphatase domain in the interval 90–388 (SHGAVSVIGR…DNISVVVVEL (299 aa)). 4 residues coordinate Mn(2+): Asp144, Gly145, Asp325, and Asp379.

It belongs to the PP2C family. Mg(2+) is required as a cofactor. Mn(2+) serves as cofactor.

It carries out the reaction O-phospho-L-seryl-[protein] + H2O = L-seryl-[protein] + phosphate. The enzyme catalyses O-phospho-L-threonyl-[protein] + H2O = L-threonyl-[protein] + phosphate. This Oryza sativa subsp. japonica (Rice) protein is Probable protein phosphatase 2C 8.